Here is a 717-residue protein sequence, read N- to C-terminus: IVVEMDPIKTSFEKWAKPGHFSXTLXKGPNTTTWIWNLHADAHDFGSHTNDLEEISRKVFRAHFGQLAIILIWLSGMYFHGARFSNYEAWLSDPTHIKPSAQVVWPIVGQEILNGDVGGGSRGIQITSGLFQIWRASGITSELQLYCTAIGALIFAALMLFAGWFHYHKAAPKLAWFQDVESMLNHHLAGLLGLGSLSWAGHQVHVSLPINQLLDAGVDPKEIPLPHEFISNRDLLAQLYPSFAEGLTPLFTLNWSEYSEFLTFRGGLNPVTGGLWLTDTAHHHLAIAILFLIAGHMYRTNWGIGHSLKEILETHKGPFTGEGHKGLYEILTTSWHAQLALNLAMLGSLTIVVAHHMYSMPPYPYLAIDYGTQLSLFTHHMWIGGFLIVGAAAHAAIFMVRDYDPTTQYNNLLDRVLRHRDAIVSHLNWACIFLGFHSFGLYIHNDTMSALGRPQDMFSDTAIQLQPIFAQWVQNTHALAPGSTAPDATASTSLTWGGGDLVAVGGKVALLPIPLGTADFLVHHIHAFTIHVTVLILLKGVLFARSSRLIPDKANLGFRFPCDGPGRGGTCQVSAWDHVFLGLFWMYNAISVVIFHFSWKMQSDVWGSISDQGMVTHITGGNFAQSSITINGWLRDFLWAQASQVIQSYGSSLSAYGLLFLGAHXVWAFSLMFLFSGRGYWQELIESIVWAHNKLEVAPVIQPRALSIVQGRAVGVA.

8 helical membrane-spanning segments follow: residues 59–82, 145–168, 184–208, 280–298, 335–358, 374–400, 422–444, and 520–538; these read VFRA…FHGA, LYCT…FHYH, LNHH…HVSL, TAHH…GHMY, WHAQ…HHMY, LSLF…IFMV, AIVS…LYIH, and FLVH…LILL. The [4Fe-4S] cluster site is built by C562 and C571. A run of 2 helical transmembrane segments spans residues 578 to 599 and 653 to 675; these read HVFL…HFSW and LSAY…MFLF. H664 provides a ligand contact to chlorophyll a'. Residues M672 and Y680 each coordinate chlorophyll a. Phylloquinone is bound at residue W681. The helical transmembrane segment at 713-717 threads the bilayer; sequence AVGVA.

Belongs to the PsaA/PsaB family. In terms of assembly, the PsaA/B heterodimer binds the P700 chlorophyll special pair and subsequent electron acceptors. PSI consists of a core antenna complex that captures photons, and an electron transfer chain that converts photonic excitation into a charge separation. The eukaryotic PSI reaction center is composed of at least 11 subunits. The cofactor is P700 is a chlorophyll a/chlorophyll a' dimer, A0 is one or more chlorophyll a, A1 is one or both phylloquinones and FX is a shared 4Fe-4S iron-sulfur center..

It localises to the plastid. The protein resides in the chloroplast thylakoid membrane. It carries out the reaction reduced [plastocyanin] + hnu + oxidized [2Fe-2S]-[ferredoxin] = oxidized [plastocyanin] + reduced [2Fe-2S]-[ferredoxin]. Its function is as follows. PsaA and PsaB bind P700, the primary electron donor of photosystem I (PSI), as well as the electron acceptors A0, A1 and FX. PSI is a plastocyanin-ferredoxin oxidoreductase, converting photonic excitation into a charge separation, which transfers an electron from the donor P700 chlorophyll pair to the spectroscopically characterized acceptors A0, A1, FX, FA and FB in turn. Oxidized P700 is reduced on the lumenal side of the thylakoid membrane by plastocyanin. The protein is Photosystem I P700 chlorophyll a apoprotein A1 of Cycas revoluta (Sago palm).